The primary structure comprises 352 residues: Selenide, water dikinase (352 aa).

Cysteine 23 is a catalytic residue. ATP-binding positions include lysine 26 and 54–56 (SRD). Aspartate 57 provides a ligand contact to Mg(2+). ATP contacts are provided by residues aspartate 74, aspartate 97, and 145–147 (GHS). Aspartate 97 provides a ligand contact to Mg(2+). A Mg(2+)-binding site is contributed by aspartate 233.

This sequence belongs to the selenophosphate synthase 1 family. Class I subfamily. As to quaternary structure, homodimer. It depends on Mg(2+) as a cofactor.

The catalysed reaction is hydrogenselenide + ATP + H2O = selenophosphate + AMP + phosphate + 2 H(+). Its function is as follows. Synthesizes selenophosphate from selenide and ATP. The sequence is that of Selenide, water dikinase from Shewanella sp. (strain MR-7).